The sequence spans 148 residues: 3-dehydroquinate dehydratase (148 aa).

Tyrosine 23 (proton acceptor) is an active-site residue. Substrate is bound by residues asparagine 75, histidine 81, and aspartate 88. Histidine 101 functions as the Proton donor in the catalytic mechanism. Substrate-binding positions include 102–103 and arginine 112; that span reads LS.

It belongs to the type-II 3-dehydroquinase family. In terms of assembly, homododecamer.

The enzyme catalyses 3-dehydroquinate = 3-dehydroshikimate + H2O. It functions in the pathway metabolic intermediate biosynthesis; chorismate biosynthesis; chorismate from D-erythrose 4-phosphate and phosphoenolpyruvate: step 3/7. Functionally, catalyzes a trans-dehydration via an enolate intermediate. This is 3-dehydroquinate dehydratase from Xanthomonas axonopodis pv. citri (strain 306).